Here is a 41-residue protein sequence, read N- to C-terminus: Large ribosomal subunit protein bL36 (41 aa).

This sequence belongs to the bacterial ribosomal protein bL36 family.

The sequence is that of Large ribosomal subunit protein bL36 from Sinorhizobium fredii (strain NBRC 101917 / NGR234).